A 293-amino-acid chain; its full sequence is Histamine N-methyltransferase (293 aa).

Glutamate 28 is a binding site for substrate. S-adenosyl-L-methionine-binding residues include glycine 60, glutamate 89, glutamine 94, serine 120, and isoleucine 142. Asparagine 283 lines the substrate pocket.

It belongs to the class I-like SAM-binding methyltransferase superfamily. HNMT family. As to quaternary structure, monomer.

Its subcellular location is the cytoplasm. It catalyses the reaction histamine + S-adenosyl-L-methionine = N(tau)-methylhistamine + S-adenosyl-L-homocysteine + H(+). Functionally, inactivates histamine by N-methylation. Plays an important role in degrading histamine and in regulating the airway response to histamine. The chain is Histamine N-methyltransferase (hnmt) from Xenopus tropicalis (Western clawed frog).